The sequence spans 207 residues: Large ribosomal subunit protein uL4 (207 aa).

The disordered stretch occupies residues 45–89 (RQGTHKVKTRSEVRGGGRKPWRQKGTGRARQGSIRSPQWRGGGTV). Over residues 60-71 (GGRKPWRQKGTG) the composition is skewed to basic residues.

It belongs to the universal ribosomal protein uL4 family. As to quaternary structure, part of the 50S ribosomal subunit.

In terms of biological role, one of the primary rRNA binding proteins, this protein initially binds near the 5'-end of the 23S rRNA. It is important during the early stages of 50S assembly. It makes multiple contacts with different domains of the 23S rRNA in the assembled 50S subunit and ribosome. Functionally, forms part of the polypeptide exit tunnel. This Bacillus anthracis (strain A0248) protein is Large ribosomal subunit protein uL4.